Consider the following 132-residue polypeptide: Small ribosomal subunit protein eS12 (132 aa).

This sequence belongs to the eukaryotic ribosomal protein eS12 family.

It localises to the cytoplasm. This is Small ribosomal subunit protein eS12 (rps12) from Xenopus laevis (African clawed frog).